The primary structure comprises 117 residues: Large ribosomal subunit protein uL22 (117 aa).

The protein belongs to the universal ribosomal protein uL22 family. As to quaternary structure, part of the 50S ribosomal subunit.

In terms of biological role, this protein binds specifically to 23S rRNA; its binding is stimulated by other ribosomal proteins, e.g. L4, L17, and L20. It is important during the early stages of 50S assembly. It makes multiple contacts with different domains of the 23S rRNA in the assembled 50S subunit and ribosome. The globular domain of the protein is located near the polypeptide exit tunnel on the outside of the subunit, while an extended beta-hairpin is found that lines the wall of the exit tunnel in the center of the 70S ribosome. The polypeptide is Large ribosomal subunit protein uL22 (Lacticaseibacillus casei (strain BL23) (Lactobacillus casei)).